Reading from the N-terminus, the 434-residue chain is Serine/threonine-protein kinase Sgk1-A (434 aa).

Residues 66 to 94 form a disordered region; the sequence is PQEPELLNENSSPPPSPSQQINLGPSSNP. The segment covering 84–94 has biased composition (polar residues); the sequence is QQINLGPSSNP. The region spanning 101–358 is the Protein kinase domain; that stretch reads FQFLKIIGKG…FMEIKNHIFF (258 aa). Residues 107-115 and K130 contribute to the ATP site; that span reads IGKGSFGKV. D225 acts as the Proton acceptor in catalysis. The 76-residue stretch at 359–434 folds into the AGC-kinase C-terminal domain; the sequence is SPINWDDLIN…SYAPPMESYL (76 aa).

The protein belongs to the protein kinase superfamily. AGC Ser/Thr protein kinase family.

It localises to the cytoplasm. It is found in the nucleus. The protein localises to the endoplasmic reticulum. The catalysed reaction is L-seryl-[protein] + ATP = O-phospho-L-seryl-[protein] + ADP + H(+). It carries out the reaction L-threonyl-[protein] + ATP = O-phospho-L-threonyl-[protein] + ADP + H(+). Its function is as follows. Protein kinase that may play an important role in cellular stress response. Plays an important role in activating certain potassium, sodium, and chloride channels, suggesting an involvement in the regulation of processes such as cell survival, neuronal excitability, and renal sodium excretion. The chain is Serine/threonine-protein kinase Sgk1-A (sgk1-a) from Xenopus laevis (African clawed frog).